A 199-amino-acid chain; its full sequence is NAD(P)H dehydrogenase (quinone) (199 aa).

A Flavodoxin-like domain is found at 4-190 (VLVLYYSTYG…EGARHQGELI (187 aa)). FMN is bound by residues 10–15 (STYGHV) and 78–80 (TRF). Tyrosine 12 contacts NAD(+). Position 98 (tryptophan 98) interacts with substrate. FMN-binding positions include 113–119 (STATQHG) and histidine 134.

This sequence belongs to the WrbA family. FMN is required as a cofactor.

The catalysed reaction is a quinone + NADH + H(+) = a quinol + NAD(+). It catalyses the reaction a quinone + NADPH + H(+) = a quinol + NADP(+). The protein is NAD(P)H dehydrogenase (quinone) of Cupriavidus metallidurans (strain ATCC 43123 / DSM 2839 / NBRC 102507 / CH34) (Ralstonia metallidurans).